The chain runs to 4265 residues: Dynein axonemal heavy chain 1 (4265 aa).

The tract at residues 1-88 (MEQPNSKGYS…KSPLTGTDKK (88 aa)) is disordered. Residues 1–1542 (MEQPNSKGYS…YIRAVNAEFI (1542 aa)) form a stem region. A compositionally biased stretch (pro residues) spans 60 to 69 (PHLPLPPAPP). AAA regions lie at residues 1543–1764 (YGYE…VISA), 1824–2057 (EAIR…SSVK), 2189–2449 (TMVP…VFQG), and 2547–2799 (DYNQ…LTRH). Positions 1581–1588 (GPAGTGKT) match the GPAGTGKT motif motif. Residue 1581-1588 (GPAGTGKT) participates in ATP binding. The CFDEFNR motif motif lies at 1631 to 1637 (CFDEFNR). ATP is bound by residues 1862-1869 (GPTGSGKS), 2227-2234 (GPTGTGKT), and 2586-2593 (GVGGSGRS). A stalk region spans residues 2814–3112 (FSILIGQKKL…EELELKCEQC (299 aa)). Residues 3074-3122 (LDEAKQRLREVEDGIATMQAKYRECITKKEELELKCEQCEQRLGRAGKL) adopt a coiled-coil conformation. AAA regions lie at residues 3197–3427 (LGNP…EIQA) and 3640–3859 (MQDF…QLKM).

Belongs to the dynein heavy chain family. As to quaternary structure, consists of at least two heavy chains and a number of intermediate and light chains. In terms of tissue distribution, expressed primarily in trachea and testis, 2 tissues containing axonemal structures. Also expressed in brain.

The protein localises to the cytoplasm. The protein resides in the cytoskeleton. It localises to the cilium axoneme. Its subcellular location is the cell projection. It is found in the cilium. The protein localises to the flagellum. In terms of biological role, force generating protein of cilia required for sperm flagellum motility. Produces force towards the minus ends of microtubules. Dynein has ATPase activity; the force-producing power stroke is thought to occur on release of ADP. Required in spermatozoa for the formation of the inner dynein arms and biogenesis of the axoneme. The sequence is that of Dynein axonemal heavy chain 1 from Homo sapiens (Human).